A 246-amino-acid polypeptide reads, in one-letter code: Phosducin (246 aa).

Over residues 1–14 (MEEAKSQSLEEDFE) the composition is skewed to acidic residues. Residues 1–70 (MEEAKSQSLE…GKDSKERVSR (70 aa)) are disordered. One can recognise a Phosducin domain in the interval 1–244 (MEEAKSQSLE…LEHTKIEEED (244 aa)). The span at 60–69 (NGKDSKERVS) shows a compositional bias: basic and acidic residues. A Phosphoserine; by PKA modification is found at Ser73. Residues 111 to 246 (YGFVYELETG…HTKIEEEDVE (136 aa)) are thioredoxin fold.

It belongs to the phosducin family. In terms of assembly, forms a complex with the beta and gamma subunits of the GTP-binding protein, transducin. Interacts with CRX. In terms of processing, light-induced changes in cyclic nucleotide levels modulate the phosphorylation of this protein by cAMP kinase.

The protein localises to the cytoplasm. The protein resides in the cytosol. Its subcellular location is the nucleus. It is found in the cell projection. It localises to the cilium. The protein localises to the photoreceptor outer segment. The protein resides in the photoreceptor inner segment. Functionally, may participate in the regulation of visual phototransduction or in the integration of photoreceptor metabolism. Inhibits the transcriptional activation activity of the cone-rod homeobox CRX. The protein is Phosducin (PDC) of Homo sapiens (Human).